Here is a 243-residue protein sequence, read N- to C-terminus: NH(3)-dependent NAD(+) synthetase (243 aa).

31–38 (GLSGGVDS) contributes to the ATP binding site. A Mg(2+)-binding site is contributed by D37. R116 lines the deamido-NAD(+) pocket. T136 is an ATP binding site. E141 is a binding site for Mg(2+). Deamido-NAD(+) is bound by residues K149 and D156. Residues K165 and S187 each coordinate ATP. Deamido-NAD(+) is bound at residue 233–234 (HK).

It belongs to the NAD synthetase family. In terms of assembly, homodimer.

The enzyme catalyses deamido-NAD(+) + NH4(+) + ATP = AMP + diphosphate + NAD(+) + H(+). Its pathway is cofactor biosynthesis; NAD(+) biosynthesis; NAD(+) from deamido-NAD(+) (ammonia route): step 1/1. Functionally, catalyzes the ATP-dependent amidation of deamido-NAD to form NAD. Uses ammonia as a nitrogen source. This is NH(3)-dependent NAD(+) synthetase from Carboxydothermus hydrogenoformans (strain ATCC BAA-161 / DSM 6008 / Z-2901).